The primary structure comprises 230 residues: MVRDTRNVDLERGLELCKPEKVNKQNLFTNIVKPQKDKINIKTDKIKFFLNNLFTEFSKFHDSCYPDGRISTRSKLRWPLLIIWCILIVFAIDKNFEVKDFLSIWINESFINENRFYSEIWGPIAIYICLFILLLLGLIYCSKIVVKAIPLISIVIAAVVVIIAVAMVKILYICHWLIYKILILAFGIKVKPLGDTLPTHNGETGSHSKATVGSDIEQIEFQNMPTPVKK.

Transmembrane regions (helical) follow at residues 78 to 98 (WPLL…NFEV), 120 to 140 (IWGP…GLIY), and 148 to 168 (AIPL…VAMV).

The protein belongs to the UPF0494 family.

The protein localises to the vacuole. It is found in the membrane. This chain is UPF0494 membrane protein C1348.07, found in Schizosaccharomyces pombe (strain 972 / ATCC 24843) (Fission yeast).